A 54-amino-acid chain; its full sequence is Ovomucoid (54 aa).

Residues 4–54 (VDCSGYPQSACPQDYVPFCGSDNKTYSNKCNFCNAVADSNGTLTLSHFGKC) form the Kazal-like domain. 3 disulfide bridges follow: cysteine 6/cysteine 36, cysteine 14/cysteine 33, and cysteine 22/cysteine 54. Residue asparagine 43 is glycosylated (N-linked (GlcNAc...) asparagine).

The protein resides in the secreted. The protein is Ovomucoid of Gallirallus australis (Weka).